Here is a 102-residue protein sequence, read N- to C-terminus: Co-chaperonin GroES (102 aa).

The protein belongs to the GroES chaperonin family. In terms of assembly, heptamer of 7 subunits arranged in a ring. Interacts with the chaperonin GroEL.

It is found in the cytoplasm. Its function is as follows. Together with the chaperonin GroEL, plays an essential role in assisting protein folding. The GroEL-GroES system forms a nano-cage that allows encapsulation of the non-native substrate proteins and provides a physical environment optimized to promote and accelerate protein folding. GroES binds to the apical surface of the GroEL ring, thereby capping the opening of the GroEL channel. In Streptomyces albus G, this protein is Co-chaperonin GroES.